The following is a 644-amino-acid chain: Pentatricopeptide repeat-containing protein At1g12775, mitochondrial (644 aa).

The transit peptide at 1–53 (MVRMMIRRLSSQASRFVQPRLLETGTLRIALINCPNELLFCCERGFSTFSDRN) directs the protein to the mitochondrion. PPR repeat units lie at residues 87–121 (TVID…GIAH), 122–156 (SIYT…GYEP), 157–191 (DTVI…GHKP), 192–226 (TLIT…GFQP), 227–261 (NEVT…NIKL), 262–296 (DAVK…GFKA), 297–331 (DIIT…KISP), 332–366 (NVVT…GIAP), 367–401 (NTIT…GCDP), 402–436 (DIMT…GVIA), 437–471 (NTVT…RVRP), 472–506 (DIVS…KMEL), 507–541 (DIGI…GVKL), 542–576 (DARA…GHAP), and 577–611 (DELT…GFPA).

This sequence belongs to the PPR family. P subfamily.

Its subcellular location is the mitochondrion. In Arabidopsis thaliana (Mouse-ear cress), this protein is Pentatricopeptide repeat-containing protein At1g12775, mitochondrial.